The primary structure comprises 367 residues: Spermidine/putrescine import ATP-binding protein PotA (367 aa).

The ABC transporter domain occupies 10-240 (IEFKNVSLDY…PINHFVANFI (231 aa)). 42-49 (GPSGSGKS) contributes to the ATP binding site.

This sequence belongs to the ABC transporter superfamily. Spermidine/putrescine importer (TC 3.A.1.11.1) family. The complex is composed of two ATP-binding proteins (PotA), two transmembrane proteins (PotB and PotC) and a solute-binding protein (PotD).

The protein localises to the cell membrane. The catalysed reaction is ATP + H2O + polyamine-[polyamine-binding protein]Side 1 = ADP + phosphate + polyamineSide 2 + [polyamine-binding protein]Side 1.. Functionally, part of the ABC transporter complex PotABCD involved in spermidine/putrescine import. Responsible for energy coupling to the transport system. In Oenococcus oeni (strain ATCC BAA-331 / PSU-1), this protein is Spermidine/putrescine import ATP-binding protein PotA.